A 625-amino-acid chain; its full sequence is Threonine--tRNA ligase (625 aa).

Residues 1 to 149 (MRVLLIHAKR…RNYEAKTTAR (149 aa)) form an editing domain region. Catalytic stretches follow at residues 197-494 (NPVN…PYIP) and 198-494 (PVNK…PYIP). Cysteine 291, histidine 342, and histidine 463 together coordinate Zn(2+).

Belongs to the class-II aminoacyl-tRNA synthetase family. As to quaternary structure, homodimer. It depends on Zn(2+) as a cofactor.

The protein resides in the cytoplasm. The catalysed reaction is tRNA(Thr) + L-threonine + ATP = L-threonyl-tRNA(Thr) + AMP + diphosphate + H(+). In terms of biological role, catalyzes the attachment of threonine to tRNA(Thr) in a two-step reaction: L-threonine is first activated by ATP to form Thr-AMP and then transferred to the acceptor end of tRNA(Thr). Also edits incorrectly charged L-seryl-tRNA(Thr). The polypeptide is Threonine--tRNA ligase (Hyperthermus butylicus (strain DSM 5456 / JCM 9403 / PLM1-5)).